Reading from the N-terminus, the 87-residue chain is Cell division topological specificity factor (87 aa).

This sequence belongs to the MinE family.

Its function is as follows. Prevents the cell division inhibition by proteins MinC and MinD at internal division sites while permitting inhibition at polar sites. This ensures cell division at the proper site by restricting the formation of a division septum at the midpoint of the long axis of the cell. This Roseiflexus sp. (strain RS-1) protein is Cell division topological specificity factor.